The chain runs to 301 residues: Probable alpha-L-glutamate ligase 1 (301 aa).

The 184-residue stretch at 104 to 287 (MQLMSRRGIG…VAGAIIAFIE (184 aa)) folds into the ATP-grasp domain. Residues lysine 141, 178 to 179 (EY), aspartate 187, and 211 to 213 (RSN) each bind ATP. Residues aspartate 248, glutamate 260, and asparagine 262 each coordinate Mg(2+). Aspartate 248, glutamate 260, and asparagine 262 together coordinate Mn(2+).

Belongs to the RimK family. Mg(2+) serves as cofactor. Requires Mn(2+) as cofactor.

This chain is Probable alpha-L-glutamate ligase 1, found in Shewanella amazonensis (strain ATCC BAA-1098 / SB2B).